Consider the following 185-residue polypeptide: MISVNDFKTGLTIEVDNGIWQVMEFQHVKPGKGAAFVRSKLRNLRTGAVQEKTFRAGEKVSKAHIENRRMQYLYASGDVHTFMDNETFEQLELSTAQIEHELKFLKENMEVHVISYQGETLGVEVPNTVELTVTETEPGIKGDTASGGTKPATLETGLTVQVPFFVNEGDVLVIDTRSGDYVSRA.

It belongs to the elongation factor P family.

The protein resides in the cytoplasm. It functions in the pathway protein biosynthesis; polypeptide chain elongation. Its function is as follows. Involved in peptide bond synthesis. Stimulates efficient translation and peptide-bond synthesis on native or reconstituted 70S ribosomes in vitro. Probably functions indirectly by altering the affinity of the ribosome for aminoacyl-tRNA, thus increasing their reactivity as acceptors for peptidyl transferase. This is Elongation factor P from Halalkalibacterium halodurans (strain ATCC BAA-125 / DSM 18197 / FERM 7344 / JCM 9153 / C-125) (Bacillus halodurans).